The following is a 245-amino-acid chain: MPRYKLTIEYDGGPFCGWQYQDNGPSVQGALEAAVKAICGDAVRVHGAGRTDAGVHALAQVAHCDIAKHFAPNRLRDGLNAHLRPHPIGVLTAEIVPDTFEARFSALRRHYVYRIANRRANLAIDVGHVWRVPRPLDTLAMHAAAQRLIGKHDFTTFRDTECQAKSPEKTLDQLDVVRNGDTVTIVTSARSFLHSQVRSMVGSLVWVGHGRWSADDLSNALAERRREACGPVAPPDGLYLVRVDY.

D52 serves as the catalytic Nucleophile. Y111 is a binding site for substrate.

This sequence belongs to the tRNA pseudouridine synthase TruA family. In terms of assembly, homodimer.

The enzyme catalyses uridine(38/39/40) in tRNA = pseudouridine(38/39/40) in tRNA. Its function is as follows. Formation of pseudouridine at positions 38, 39 and 40 in the anticodon stem and loop of transfer RNAs. The polypeptide is tRNA pseudouridine synthase A (Nitrobacter hamburgensis (strain DSM 10229 / NCIMB 13809 / X14)).